The sequence spans 203 residues: Sarcosine oxidase subunit gamma (203 aa).

It belongs to the SoxG family. Heterotetramer composed of subunits alpha (SoxA), beta (SoxB), gamma (SoxG) and delta (SoxD).

Its subcellular location is the cytoplasm. It catalyses the reaction sarcosine + (6S)-5,6,7,8-tetrahydrofolate + O2 = (6R)-5,10-methylene-5,6,7,8-tetrahydrofolate + glycine + H2O2. The catalysed reaction is sarcosine + O2 + H2O = formaldehyde + glycine + H2O2. Functionally, in the presence of tetrahydrofolate, catalyzes the oxidative demethylation of sarcosine to yield glycine, 5,10-methylenetetrahydrofolate and hydrogen peroxide. In the absence of tetrahydrofolate, catalyzes the oxidative demethylation of sarcosine to yield glycine, formaldehyde and hydrogen peroxide. This chain is Sarcosine oxidase subunit gamma, found in Corynebacterium sp. (strain P-1).